The following is a 385-amino-acid chain: DNA replication and repair protein RecF (385 aa).

30–37 (GANAAGKT) provides a ligand contact to ATP.

Belongs to the RecF family.

Its subcellular location is the cytoplasm. The RecF protein is involved in DNA metabolism; it is required for DNA replication and normal SOS inducibility. RecF binds preferentially to single-stranded, linear DNA. It also seems to bind ATP. This is DNA replication and repair protein RecF from Herpetosiphon aurantiacus (strain ATCC 23779 / DSM 785 / 114-95).